The chain runs to 561 residues: AT-rich interactive domain-containing protein 3B (561 aa).

An N-acetylmethionine modification is found at Met1. Low complexity predominate over residues 1-17; the sequence is MEPLQQQQQQQQQQQKQ. 3 disordered regions span residues 1 to 36, 53 to 122, and 136 to 179; these read MEPLQQQQQQQQQQQKQPHLAPLQMDAREKQGQQMR, LSAT…SKYF, and PMSN…WNLD. Position 89 is a phosphoserine (Ser89). Acidic residues predominate over residues 90–109; it reads EPEEEDGGLEDEDGDDEVAE. Positions 152 to 162 are enriched in basic and acidic residues; the sequence is QAKEDHTKDAS. Positions 164 to 178 are enriched in polar residues; that stretch reads ASPSVSTAGQPNWNL. Residue Ser165 is modified to Phosphoserine. The interaction with RB1 stretch occupies residues 203-365; sequence SRDFAKLYEL…SPPKIRFPIL (163 aa). The 93-residue stretch at 215–307 folds into the ARID domain; the sequence is DPERKEFLDD…YLYAYECEKK (93 aa). Ser311 bears the Phosphoserine mark. Asymmetric dimethylarginine is present on Arg361. The segment at 370-397 is disordered; the sequence is SSGTNTSSPRISPATTLRKGDGAPVTTV. The REKLES domain maps to 419-517; it reads AALEQLRERL…GVLFAQKPVV (99 aa). Residues 490–513 are interaction with ARID3A; it reads SSIGSINMSVDIDGTTYAGVLFAQ. A compositionally biased stretch (low complexity) spans 523 to 552; that stretch reads SAPQSLGSSASSSSSSHCSPSPTSSRGTPS. Residues 523–561 are disordered; that stretch reads SAPQSLGSSASSSSSSHCSPSPTSSRGTPSAEPSTSWSL.

As to quaternary structure, heterodimer with ARID3A. Interacts with unphosphorylated RB1. In terms of tissue distribution, expressed in placenta, testis and leukocytes. Expressed in neuroblastoma. Present in K-562 erythrocytic leukemia cell line (at protein level).

It localises to the nucleus. Transcription factor which may be involved in neuroblastoma growth and malignant transformation. Favors nuclear targeting of ARID3A. The chain is AT-rich interactive domain-containing protein 3B (ARID3B) from Homo sapiens (Human).